The sequence spans 283 residues: 3-methyl-2-oxobutanoate hydroxymethyltransferase (283 aa).

Residues Asp-46 and Asp-85 each coordinate Mg(2+). Residues 46–47 (DS), Asp-85, and Lys-115 each bind 3-methyl-2-oxobutanoate. Glu-117 contributes to the Mg(2+) binding site. The active-site Proton acceptor is Glu-184.

Belongs to the PanB family. As to quaternary structure, homodecamer; pentamer of dimers. The cofactor is Mg(2+).

The protein resides in the cytoplasm. It carries out the reaction 3-methyl-2-oxobutanoate + (6R)-5,10-methylene-5,6,7,8-tetrahydrofolate + H2O = 2-dehydropantoate + (6S)-5,6,7,8-tetrahydrofolate. The protein operates within cofactor biosynthesis; (R)-pantothenate biosynthesis; (R)-pantoate from 3-methyl-2-oxobutanoate: step 1/2. Its function is as follows. Catalyzes the reversible reaction in which hydroxymethyl group from 5,10-methylenetetrahydrofolate is transferred onto alpha-ketoisovalerate to form ketopantoate. The protein is 3-methyl-2-oxobutanoate hydroxymethyltransferase of Acetivibrio thermocellus (strain ATCC 27405 / DSM 1237 / JCM 9322 / NBRC 103400 / NCIMB 10682 / NRRL B-4536 / VPI 7372) (Clostridium thermocellum).